A 270-amino-acid polypeptide reads, in one-letter code: tRNA pseudouridine synthase A (270 aa).

Asp51 functions as the Nucleophile in the catalytic mechanism. Tyr109 is a substrate binding site.

The protein belongs to the tRNA pseudouridine synthase TruA family. In terms of assembly, homodimer.

The enzyme catalyses uridine(38/39/40) in tRNA = pseudouridine(38/39/40) in tRNA. Its function is as follows. Formation of pseudouridine at positions 38, 39 and 40 in the anticodon stem and loop of transfer RNAs. This chain is tRNA pseudouridine synthase A, found in Burkholderia lata (strain ATCC 17760 / DSM 23089 / LMG 22485 / NCIMB 9086 / R18194 / 383).